The following is an 80-amino-acid chain: Cytochrome c oxidase subunit 7A1, mitochondrial (80 aa).

A mitochondrion-targeting transit peptide spans 1–21; sequence MRALRVSQALVRSFSSSTRSH. The Mitochondrial matrix portion of the chain corresponds to 22–46; that stretch reads LENRVAEKQKLFQADNDLPVHLKGG. The chain crosses the membrane as a helical span at residues 47–75; sequence GMDNVLYRLTMTLTLGGTAYCLYCLGWAS. The Mitochondrial intermembrane portion of the chain corresponds to 76–80; the sequence is FPHKK.

This sequence belongs to the cytochrome c oxidase VIIa family. As to quaternary structure, component of the complex IV (CIV, cytochrome c oxidase), a multisubunit enzyme composed of 14 subunits. The complex is composed of a catalytic core of 3 subunits MT-CO1, MT-CO2 and MT-CO3, encoded in the mitochondrial DNA, and 11 supernumerary subunits COX4I, COX5A, COX5B, COX6A, COX6B, COX6C, COX7A, COX7B, COX7C, COX8 and NDUFA4, which are encoded in the nuclear genome. The complex exists as a monomer or a dimer and forms supercomplexes (SCs) in the inner mitochondrial membrane with NADH-ubiquinone oxidoreductase (complex I, CI) and ubiquinol-cytochrome c oxidoreductase (cytochrome b-c1 complex, complex III, CIII), resulting in different assemblies (supercomplex SCI(1)III(2)IV(1) and megacomplex MCI(2)III(2)IV(2)).

The protein resides in the mitochondrion inner membrane. It functions in the pathway energy metabolism; oxidative phosphorylation. Its function is as follows. Component of the mitochondrial respiratory complex IV (CIV, also named cytochrome c oxidase complex), the last enzyme in the mitochondrial electron transport chain which drives oxidative phosphorylation. The CIV complex is the component of the respiratory chain that catalyzes the reduction of oxygen to water. Acts as an assembly factor that specifically drives the homodimerization of CIV complexes, mediating the formation of mitochondrial respiratory supercomplexes (respirasomes) containing two CIV: supercomplxes with two molecules of CIV show improved activity. Despite being highly expressed in brown adipose tissue, not required for thermogenesis. This is Cytochrome c oxidase subunit 7A1, mitochondrial from Mus musculus (Mouse).